Reading from the N-terminus, the 1060-residue chain is Anoctamin-8 (1060 aa).

The segment at 1-32 (MAEAASGAGDVTLEGERGKRPPPEGEPAAPAS) is disordered. Ala-2 carries the N-acetylalanine modification. Over 2–244 (AEAASGAGDV…DDICDYFGVK (243 aa)) the chain is Cytoplasmic. Basic and acidic residues predominate over residues 14–23 (EGERGKRPPP). Residues 245-265 (IAMYFAWLGFYTSAMVYPAVF) traverse the membrane as a helical segment. The Extracellular segment spans residues 266 to 281 (GSVLYTFTEADQTSRD). A helical transmembrane segment spans residues 282–302 (VSCVVFALFNVIWSTLFLEEW). Topologically, residues 303–356 (KRRGAELAYKWGTLDSPGEAVEEPRPQFRGIRRISPITRAEEFYYPPWKRLLFQ) are cytoplasmic. Ser-318 carries the phosphoserine modification. Residues 357–377 (LLVSLPLCLACLICVFILMLG) traverse the membrane as a helical segment. Residues 378–400 (CFQLQELVLSVKGLPRLVRFLPK) are Extracellular-facing. Residues 401 to 421 (VMLALLVSVSAEGYKKLAVWL) traverse the membrane as a helical segment. Over 422 to 437 (NDMENYRLESTYERHL) the chain is Cytoplasmic. The helical transmembrane segment at 438–458 (IIKVVLFQFVNSYLSLFYIGF) threads the bilayer. Residues 459–745 (YLKDMDRLKE…YEDTFQDYQE (287 aa)) lie on the Extracellular side of the membrane. 4 disordered regions span residues 529-605 (AQAD…SLLD), 619-640 (GAGR…SPTM), 653-672 (AEED…EPQT), and 680-723 (GEGR…HSPQ). Residues 534-547 (GGAGSRRCLGGGCG) are compositionally biased toward gly residues. Composition is skewed to acidic residues over residues 549–559 (PEEENEEEEEA) and 581–602 (EEDE…EEGS). Ser-665 carries the phosphoserine modification. Residues 680–694 (GEGRDQGPDGDRDTE) show a composition bias toward basic and acidic residues. Asn-708 is a glycosylation site (N-linked (GlcNAc...) asparagine). Residues 746-766 (MFVQFGYVVLFSSAFPLAALC) form a helical membrane-spanning segment. Residues 767–802 (ALVNNLIEIRSDAFKLCTGLQRPFGRRVESIGQWQK) are Cytoplasmic-facing. Ser-796 is modified (phosphoserine). Residues 803–823 (VMEAMGVLAIVVNCYLIGQCG) traverse the membrane as a helical segment. Topologically, residues 824-836 (QLQRLFPWLSPEA) are extracellular. The helical transmembrane segment at 837-857 (AIVSVVVLEHLALLVKYLIHV) threads the bilayer. Topologically, residues 858–1060 (AIPDIPGWVA…PRPEDAGHRP (203 aa)) are cytoplasmic. The interval 884 to 1060 (HERQAQQRFQ…PRPEDAGHRP (177 aa)) is disordered. Basic and acidic residues-rich tracts occupy residues 899–927 (RREE…EARA) and 935–950 (VAER…ERPR). Over residues 972–986 (TRPPAPTGCAPPPRS) the composition is skewed to pro residues. Residue Arg-991 is modified to Asymmetric dimethylarginine; alternate. Residue Arg-991 is modified to Omega-N-methylarginine; alternate. Arg-999 carries the post-translational modification Omega-N-methylarginine. Residues 1049–1060 (PEPRPEDAGHRP) are compositionally biased toward basic and acidic residues.

Belongs to the anoctamin family. In terms of tissue distribution, predominant expression seen in epithelial tissues.

The protein resides in the cell membrane. In terms of biological role, does not exhibit calcium-activated chloride channel (CaCC) activity. The chain is Anoctamin-8 (Ano8) from Mus musculus (Mouse).